The chain runs to 545 residues: Ubiquitin carboxyl-terminal hydrolase 17-like protein C (545 aa).

The USP domain occupies 51-348 (CGLQNTGNSC…NAYVLFYVQQ (298 aa)). The Nucleophile role is filled by Cys60. Catalysis depends on His307, which acts as the Proton acceptor. Disordered stretches follow at residues 368 to 442 (DPEY…QKLG) and 489 to 539 (WGRD…KQGQ). Over residues 374–385 (KKSRRKKHKKKS) the composition is skewed to basic residues. Composition is skewed to basic and acidic residues over residues 393–404 (EPCKNREKRATK) and 489–505 (WGRD…HNAD). The span at 508 to 519 (LTSQDPVNTGQL) shows a compositional bias: polar residues. Residues 524–537 (GRRRSKKGKNKNKQ) show a composition bias toward basic residues.

It belongs to the peptidase C19 family. USP17 subfamily. In terms of tissue distribution, expressed in T cells.

It localises to the nucleus. It is found in the endoplasmic reticulum. It catalyses the reaction Thiol-dependent hydrolysis of ester, thioester, amide, peptide and isopeptide bonds formed by the C-terminal Gly of ubiquitin (a 76-residue protein attached to proteins as an intracellular targeting signal).. Its function is as follows. Deubiquitinating enzyme that removes conjugated ubiquitin from specific proteins to regulate different cellular processes. Important for preimplantation stage embryonic development. The sequence is that of Ubiquitin carboxyl-terminal hydrolase 17-like protein C from Mus musculus (Mouse).